The following is a 412-amino-acid chain: 4-hydroxyphenylpyruvate dioxygenase (412 aa).

2 VOC domains span residues 31–179 (GYDH…LISR) and 209–369 (RIDH…LFTK). Positions 212, 295, and 380 each coordinate Fe cation.

Belongs to the 4HPPD family. Requires Fe cation as cofactor.

The enzyme catalyses 3-(4-hydroxyphenyl)pyruvate + O2 = homogentisate + CO2. It participates in amino-acid degradation; L-phenylalanine degradation; acetoacetate and fumarate from L-phenylalanine: step 3/6. In Neurospora crassa (strain ATCC 24698 / 74-OR23-1A / CBS 708.71 / DSM 1257 / FGSC 987), this protein is 4-hydroxyphenylpyruvate dioxygenase.